We begin with the raw amino-acid sequence, 385 residues long: Chaperone protein DnaJ (385 aa).

One can recognise a J domain in the interval 5 to 70 (DYYEVLGVSK…ERKAAYDRYG (66 aa)). The CR-type zinc finger occupies 143–221 (GLHKTINVPT…CNGHGRVEKD (79 aa)). Positions 156, 159, 173, 176, 195, 198, 209, and 212 each coordinate Zn(2+). CXXCXGXG motif repeat units follow at residues 156 to 163 (CTSCEGTG), 173 to 180 (CPTCSGMG), 195 to 202 (CPTCSGLG), and 209 to 216 (CKTCNGHG).

It belongs to the DnaJ family. As to quaternary structure, homodimer. Zn(2+) is required as a cofactor.

It localises to the cytoplasm. In terms of biological role, participates actively in the response to hyperosmotic and heat shock by preventing the aggregation of stress-denatured proteins and by disaggregating proteins, also in an autonomous, DnaK-independent fashion. Unfolded proteins bind initially to DnaJ; upon interaction with the DnaJ-bound protein, DnaK hydrolyzes its bound ATP, resulting in the formation of a stable complex. GrpE releases ADP from DnaK; ATP binding to DnaK triggers the release of the substrate protein, thus completing the reaction cycle. Several rounds of ATP-dependent interactions between DnaJ, DnaK and GrpE are required for fully efficient folding. Also involved, together with DnaK and GrpE, in the DNA replication of plasmids through activation of initiation proteins. This is Chaperone protein DnaJ from Ruegeria sp. (strain TM1040) (Silicibacter sp.).